A 369-amino-acid polypeptide reads, in one-letter code: Protein DUF642 L-GALACTONO-1,4-LACTONE-RESPONSIVE GENE 2 (369 aa).

The first 19 residues, 1–19 (MEGVTVVSFFLLFIATAMA), serve as a signal peptide directing secretion. N125 carries N-linked (GlcNAc...) asparagine glycosylation.

In terms of tissue distribution, expressed in roots, seedlings and leaves.

Its subcellular location is the secreted. It is found in the cell wall. Involved in the regulation of testa rupture during seed germination. Required during roots and rosettes development. The polypeptide is Protein DUF642 L-GALACTONO-1,4-LACTONE-RESPONSIVE GENE 2 (Arabidopsis thaliana (Mouse-ear cress)).